Consider the following 247-residue polypeptide: MAAISPWLSSPQSFSNPRVTITDSRRCSSISAAISVLDSSNEEQHRISSRDHVGMKRRDVMLQIASSVFFLPLAISPAFAETNASEAFRVYTDETNKFEISIPQDWQVGQAEPNGFKSITAFYPQETSTSNVSIAITGLGPDFTRMESFGKVEAFAETLVSGLDRSWQKPVGVTAKLIDSRASKGFYYIEYTLQNPGEARKHLYSAIGMATNGWYNRLYTVTGQFTDEESAEQSSKIQKTVKSFRFI.

The N-terminal 26 residues, 1–26 (MAAISPWLSSPQSFSNPRVTITDSRR), are a transit peptide targeting the chloroplast. The transit peptide at 27-80 (CSSISAAISVLDSSNEEQHRISSRDHVGMKRRDVMLQIASSVFFLPLAISPAFA) directs the protein to the thylakoid.

It belongs to the PsbP family.

The protein localises to the plastid. Its subcellular location is the chloroplast thylakoid lumen. The chain is PsbP domain-containing protein 3, chloroplastic (PPD3) from Arabidopsis thaliana (Mouse-ear cress).